The primary structure comprises 727 residues: Phosphoribosylformylglycinamidine synthase subunit PurL (727 aa).

His47 is an active-site residue. ATP is bound by residues Tyr50 and Lys89. Glu91 is a binding site for Mg(2+). Residues 92 to 95 (SHNH) and Arg114 each bind substrate. Residue His93 is the Proton acceptor of the active site. Residue Asp115 participates in Mg(2+) binding. Gln238 is a binding site for substrate. Asp266 is a Mg(2+) binding site. A substrate-binding site is contributed by 310 to 312 (ESQ). ATP contacts are provided by Asp490 and Gly527. Asn528 lines the Mg(2+) pocket. Ser530 contacts substrate.

Belongs to the FGAMS family. As to quaternary structure, monomer. Part of the FGAM synthase complex composed of 1 PurL, 1 PurQ and 2 PurS subunits.

Its subcellular location is the cytoplasm. The enzyme catalyses N(2)-formyl-N(1)-(5-phospho-beta-D-ribosyl)glycinamide + L-glutamine + ATP + H2O = 2-formamido-N(1)-(5-O-phospho-beta-D-ribosyl)acetamidine + L-glutamate + ADP + phosphate + H(+). It participates in purine metabolism; IMP biosynthesis via de novo pathway; 5-amino-1-(5-phospho-D-ribosyl)imidazole from N(2)-formyl-N(1)-(5-phospho-D-ribosyl)glycinamide: step 1/2. Its function is as follows. Part of the phosphoribosylformylglycinamidine synthase complex involved in the purines biosynthetic pathway. Catalyzes the ATP-dependent conversion of formylglycinamide ribonucleotide (FGAR) and glutamine to yield formylglycinamidine ribonucleotide (FGAM) and glutamate. The FGAM synthase complex is composed of three subunits. PurQ produces an ammonia molecule by converting glutamine to glutamate. PurL transfers the ammonia molecule to FGAR to form FGAM in an ATP-dependent manner. PurS interacts with PurQ and PurL and is thought to assist in the transfer of the ammonia molecule from PurQ to PurL. The protein is Phosphoribosylformylglycinamidine synthase subunit PurL of Acidiphilium cryptum (strain JF-5).